Reading from the N-terminus, the 363-residue chain is Flagellar P-ring protein (363 aa).

The N-terminal stretch at 1–20 (MKKFTLLLLCFVLPMTSAYA) is a signal peptide.

It belongs to the FlgI family. As to quaternary structure, the basal body constitutes a major portion of the flagellar organelle and consists of four rings (L,P,S, and M) mounted on a central rod.

Its subcellular location is the periplasm. The protein resides in the bacterial flagellum basal body. Its function is as follows. Assembles around the rod to form the L-ring and probably protects the motor/basal body from shearing forces during rotation. The protein is Flagellar P-ring protein of Vibrio vulnificus (strain YJ016).